The following is a 57-amino-acid chain: UPF0391 membrane protein IL0696 (57 aa).

Helical transmembrane passes span 4-24 and 28-48; these read WVLI…GGIA and AGIA…SLVV.

This sequence belongs to the UPF0391 family.

It localises to the cell membrane. This Idiomarina loihiensis (strain ATCC BAA-735 / DSM 15497 / L2-TR) protein is UPF0391 membrane protein IL0696.